The sequence spans 23 residues: GINTLKKVIQGLHEVIKLVSNHE.

As to expression, expressed by the skin glands.

The protein resides in the secreted. Possesses antifungal activity against C.albicans and is also active against E.coli and S.aureus. The protein is Pseudin-3 of Pseudis paradoxa (Paradoxical frog).